The sequence spans 135 residues: UPF0216 protein MTH_949 (135 aa).

Belongs to the UPF0216 family.

The polypeptide is UPF0216 protein MTH_949 (Methanothermobacter thermautotrophicus (strain ATCC 29096 / DSM 1053 / JCM 10044 / NBRC 100330 / Delta H) (Methanobacterium thermoautotrophicum)).